The primary structure comprises 461 residues: Asparagine--tRNA ligase (461 aa).

The protein belongs to the class-II aminoacyl-tRNA synthetase family. As to quaternary structure, homodimer.

It localises to the cytoplasm. It carries out the reaction tRNA(Asn) + L-asparagine + ATP = L-asparaginyl-tRNA(Asn) + AMP + diphosphate + H(+). This Geotalea uraniireducens (strain Rf4) (Geobacter uraniireducens) protein is Asparagine--tRNA ligase.